The sequence spans 340 residues: Sideroflexin-5 (340 aa).

Transmembrane regions (helical) follow at residues 103-123, 163-183, 254-274, and 287-307; these read IFMPFRMSGYIPFGTPIVVGL, FIQGYLGAVISAVSIAVGLNV, LTRVVLPMPILVLPPIVMSML, and LLPVQSLVCLAAFGLALPLAI.

It belongs to the sideroflexin family. As to expression, primarily expressed in the brain.

Its subcellular location is the mitochondrion inner membrane. It catalyses the reaction citrate(in) = citrate(out). Mitochondrial amino-acid transporter. Transports citrate. Does not act as a serine transporter: not able to mediate transport of serine into mitochondria. In brown adipose tissue, plays a role in the regulation of UCP1-dependent thermogenesis probably by supporting mitochondrial glycerol-3-phosphate utilization. This Homo sapiens (Human) protein is Sideroflexin-5.